We begin with the raw amino-acid sequence, 159 residues long: RxLR effector protein 24 (159 aa).

A signal peptide spans 1 to 18 (MRFLVWVFFVGLVTFVSG). Residues 58 to 82 (RFLRSNANQDLTTANDDSDVKEEER) carry the RxLR-dEER motif. The interval 109–159 (EKAFQHMMKQGETPTSLAKRLEIGGAAELRYEKVYEKYTAWWINYHTVAGT) is RABA-binding domain.

The protein belongs to the RxLR effector family. In terms of assembly, interacts with potato RABA GTPases including RABA1a, RABA2a and RABA4a.

It is found in the secreted. The protein localises to the host cell membrane. The protein resides in the host endomembrane system. Effector protein that contributes to pathogen virulence. Targets members of the RABA GTPases subfamily to inhibit vesicular secretion, leading to an accumulation of secretory proteins in the endoplasmic reticulum. The chain is RxLR effector protein 24 from Phytophthora infestans (strain T30-4) (Potato late blight agent).